Consider the following 57-residue polypeptide: Large ribosomal subunit protein bL32 (57 aa).

This sequence belongs to the bacterial ribosomal protein bL32 family.

This is Large ribosomal subunit protein bL32 from Staphylococcus aureus (strain MSSA476).